We begin with the raw amino-acid sequence, 1857 residues long: Ankyrin repeat domain-containing protein 31 (1857 aa).

2 disordered regions span residues 1–30 (MENG…EDEE) and 195–215 (SEPG…DEES). The span at 195–207 (SEPGEEVTQTMTS) shows a compositional bias: polar residues. 3 ANK repeats span residues 475-504 (FGEN…NVNQ), 508-537 (DGWT…DVNV), and 541-570 (YQIT…DPLF). Residues 676-691 (KFGKSNLNSVKNSRTN) are compositionally biased toward polar residues. Disordered stretches follow at residues 676-711 (KFGK…VDDR), 813-844 (VTTH…KGKA), 995-1038 (RDSS…TVVH), 1046-1065 (KAEK…NTDF), and 1075-1137 (ANSS…QNFR). The segment covering 692-704 (VSKRKGQKNRQQK) has biased composition (basic residues). A compositionally biased stretch (polar residues) spans 814-839 (TTHQQPHTNQEQYSSPYKSLGNNSSN). Basic and acidic residues predominate over residues 1008 to 1019 (SLERKQDTDKNY). Positions 1023–1032 (GPNTSSSSRP) are enriched in polar residues. Residues 1082–1136 (QRKEKENVRKSDAELTHNDSEAERTLKSCEEKKKNMDSETHSPCDIQEHRKDQNF) show a composition bias toward basic and acidic residues. ANK repeat units lie at residues 1162–1191 (KGES…DVNL), 1195–1224 (AGWT…NVNC), and 1228–1257 (DGIV…NPNQ). Disordered stretches follow at residues 1457-1479 (NSDI…AHAQ), 1540-1570 (GGLL…AENS), 1609-1640 (DPHS…AEPL), and 1663-1697 (AAAA…TTPR). The span at 1555–1570 (ASSSQPAALTPHAENS) shows a compositional bias: polar residues. A compositionally biased stretch (low complexity) spans 1663–1683 (AAAASHTDSTQSSLSSASAHQ). Positions 1687 to 1782 (KTVPHRNTTP…TYLGRELVKC (96 aa)) constitute an RAMA domain.

Interacts with REC114; the interaction is direct. Interacts with IHO1. Present in meiotic cells (at protein level).

It localises to the nucleus. Its subcellular location is the chromosome. Its function is as follows. Required for DNA double-strand breaks (DSBs) formation during meiotic recombination. Regulates the spatial and temporal patterns of pre-DSB recombinosome assembly and recombination activity by acting as a scaffold that anchors REC114 and other factors to specific genomic locations, thereby regulating DSB formation. Plays a key role in recombination in the pseudoautosomal regions of sex chromosomes. The sequence is that of Ankyrin repeat domain-containing protein 31 from Mus musculus (Mouse).